The following is a 463-amino-acid chain: Glycerol-3-phosphate acyltransferase, chloroplastic (463 aa).

The transit peptide at 1–91 (MSIFFSPSSP…AATQPSAGSD (91 aa)) directs the protein to the chloroplast. Disordered regions lie at residues 18–37 (NANPRVSPSSSPSSAFTPPL) and 65–95 (AETVHGNKWPSPSSSSSAATQPSAGSDHGHS). Composition is skewed to low complexity over residues 24-37 (SPSSSPSSAFTPPL) and 74-90 (PSPSSSSSAATQPSAGS). The short motif at 229 to 234 (HQTEAD) is the HXXXXD motif element.

It belongs to the GPAT/DAPAT family.

The protein resides in the plastid. It localises to the chloroplast stroma. It catalyses the reaction sn-glycerol 3-phosphate + an acyl-CoA = a 1-acyl-sn-glycero-3-phosphate + CoA. It functions in the pathway phospholipid metabolism; CDP-diacylglycerol biosynthesis; CDP-diacylglycerol from sn-glycerol 3-phosphate: step 1/3. Esterifies acyl-group from acyl-ACP to the sn-1 position of glycerol-3-phosphate. The enzyme from chilling-resistant plants discriminates against non-fluid palmitic acid and selects oleic acid whereas the enzyme from sensitive plants accepts both fatty acids. This chain is Glycerol-3-phosphate acyltransferase, chloroplastic, found in Carthamus tinctorius (Safflower).